Reading from the N-terminus, the 140-residue chain is MSTNSFDGSIVSSYLTTRMPPWAGVRQNVMGSSIDGRPVLPANSTTLTYETVSGTPLETAASAAASAAAATARGIVTDFAFLSPLASSAASRSSARDDKLTALLAQLDSLTRELNVVSQQLLDLRQQVSALKASSPPNAV.

Residues 100–127 are a coiled coil; that stretch reads LTALLAQLDSLTRELNVVSQQLLDLRQQ.

The protein belongs to the adenoviridae hexon-interlacing protein family. As to quaternary structure, homotrimer. Interacts with hexon protein; this interaction tethers the hexons together. Self-interacts with adjacent proteins. Interacts with kinesin light chain KLC1; this interaction leads to capsid disruption at the nuclear pore complex during virus entry into host cell.

It localises to the virion. The protein localises to the host nucleus. In terms of biological role, structural component of the virion that acts as a cement protein on the capsid exterior and forms triskelion structures consisting of three molecules that stabilize three hexon trimers at the center of each icosahedral facet and fixes the peripentonal hexons. Dispensable for assembly. During virus entry, recruits the anterograde motor kinesin-1 to the capsid docked at the nuclear pore complex thereby subjecting the docked capsid to a pulling force. The resulting tension leads to capsid disruption, dispersion of capsid fragments toward cell periphery and eventually viral DNA entry into the host nucleus. The sequence is that of Hexon-interlacing protein from Human adenovirus C serotype 5 (HAdV-5).